Here is a 181-residue protein sequence, read N- to C-terminus: Small ribosomal subunit protein uS4 (181 aa).

Positions 108–180 (RRLQTIVYRK…GERQRIMNQR (73 aa)) constitute an S4 RNA-binding domain.

Belongs to the universal ribosomal protein uS4 family. Part of the 30S ribosomal subunit. Contacts protein S5. The interaction surface between S4 and S5 is involved in control of translational fidelity.

Functionally, one of the primary rRNA binding proteins, it binds directly to 16S rRNA where it nucleates assembly of the body of the 30S subunit. Its function is as follows. With S5 and S12 plays an important role in translational accuracy. The protein is Small ribosomal subunit protein uS4 of Methanocorpusculum labreanum (strain ATCC 43576 / DSM 4855 / Z).